The following is an 871-amino-acid chain: Transient receptor potential cation channel subfamily V member 4 (871 aa).

2 disordered regions span residues 1 to 68 and 110 to 143; these read MADP…PNLR and YGTYRHHPSDNKRWRRKVVEKQPQSPKAPAPQPP. The Cytoplasmic portion of the chain corresponds to 1–469; that stretch reads MADPGDGPRA…RDKWRKFGAV (469 aa). Y110 carries the post-translational modification Phosphotyrosine; by SRC-type Tyr-kinases. Over residues 116–129 the composition is skewed to basic and acidic residues; it reads HPSDNKRWRRKVVE. Residues K192, K197, N201, 236 to 239, and R248 contribute to the ATP site; that span reads YRGQ. ANK repeat units follow at residues 237–266 and 284–313; these read RGQTSLHIAIERRCKHYVELLVAQGADVHA and FGELPLSLAACTNQPHIVNYLTENPHKKAD. 249–251 contacts a 1,2-diacyl-sn-glycero-3-phospho-(1D-myo-inositol-4,5-bisphosphate); it reads RCK. At Y253 the chain carries Phosphotyrosine; by LYN. A 1,2-diacyl-sn-glycero-3-phospho-(1D-myo-inositol-4,5-bisphosphate)-binding positions include 296-299 and K344; that span reads NQPH. The ANK 3 repeat unit spans residues 369 to 398; that stretch reads DGLSPLMMAAKTGKIGVFQHIIRREVTDED. A helical membrane pass occupies residues 470-490; that stretch reads SFYINVVSYLCAMVIFTLTAY. Residues 491–507 lie on the Extracellular side of the membrane; sequence YQPLEGTPPYPYRTTVD. Residues 508-534 traverse the membrane as a helical segment; it reads YLRLAGEVITLFTGVLFFFTSIKDLFT. Residues 535–547 are Cytoplasmic-facing; it reads KKCPGVNSLFVDG. A helical transmembrane segment spans residues 548-568; it reads SFQLLYFIYSVLVVVSAALYL. Topologically, residues 569-572 are extracellular; that stretch reads AGIE. A helical membrane pass occupies residues 573 to 593; sequence AYLAVMVFALVLGWMNALYFT. Residues 594-608 are Cytoplasmic-facing; it reads RGLKLTGTYSIMIQK. Residues 609–636 traverse the membrane as a helical segment; the sequence is ILFKDLFRFLLVYLLFMIGYASALVTLL. Residues 637 to 665 lie on the Extracellular side of the membrane; sequence NPCTNMKVCDEDQSNCTVPTYPACRDSET. N-linked (GlcNAc...) asparagine glycosylation is present at N651. An intramembrane region (pore-forming) is located at residues 666–685; that stretch reads FSAFLLDLFKLTIGMGDLEM. Residues 679–682 carry the Selectivity filter motif; that stretch reads GMGD. Position 682 (D682) interacts with Ca(2+). The Extracellular segment spans residues 686-693; that stretch reads LSSAKYPV. The helical transmembrane segment at 694–722 threads the bilayer; sequence VFILLLVTYIILTFVLLLNMLIALMGETV. At 723–871 the chain is on the cytoplasmic side; sequence GQVSKESKHI…PKWRTDDAPL (149 aa). Y805 is subject to Phosphotyrosine; by SRC-type Tyr-kinases. Positions 812 to 831 are interaction with calmodulin and ITPR3; sequence HTVGRLRRDRWSSVVPRVVE. A Phosphoserine; by PKC and PKA modification is found at S824. Positions 850-871 are disordered; the sequence is NPNCDGHQQGYAPKWRTDDAPL.

Belongs to the transient receptor (TC 1.A.4) family. TrpV subfamily. TRPV4 sub-subfamily. As to quaternary structure, homotetramer. Interacts with calmodulin. Interacts with CTNNB1. The TRPV4 and CTNNB1 complex can interact with CDH1. Part of a complex containing MLC1, AQP4, HEPACAM and ATP1B1. Interacts with MAP7 and Src family Tyr protein kinases LYN, SRC, FYN, HCK, LCK and YES. Interacts with PACSIN1, PACSIN2 and PACSIN3 (via SH3 domain). Interacts with ITPR3. Interacts with AQP5; the interaction is probably indirect and regulates TRPV4 activation by hypotonicity. Interacts with ANO1. Interacts (via C-terminus) with PKD2 (via C-terminus). Interacts with DDX3X; this interaction is decreased when the channel is activated. Post-translationally, N-glycosylated. Detected in liver, kidney, heart, brain cortex, cerebellum and brainstem (at protein level). Expressed in salivary glands (at protein level). Expressed in heart, lung, spleen, liver, kidney, brain, skeletal muscle and testis. In the central nervous system, expressed in the lamina terminalis (arched vascular organ and neurons of the subfornical organ), median preoptic area, ventral hippocampal commissure, and ependymal cells of the choroid plexus. In the cochlea, expressed in both inner and outer hair cells, and in marginal cells of the cochlear stria vascularis. Expressed in large neurons of the trigeminal ganglion. In the kidney cortex, strongly expressed by epithelial cells of tubules and much weaker in glomeruli.

It is found in the cell membrane. Its subcellular location is the apical cell membrane. The protein localises to the cell junction. It localises to the adherens junction. The protein resides in the cell projection. It is found in the cilium. It carries out the reaction Ca(2+)(in) = Ca(2+)(out). Its function is as follows. Non-selective calcium permeant cation channel involved in osmotic sensitivity and mechanosensitivity. Activation by exposure to hypotonicity within the physiological range exhibits an outward rectification. Also activated by heat, low pH, citrate and phorbol esters. Increase of intracellular Ca(2+) potentiates currents. Channel activity seems to be regulated by a calmodulin-dependent mechanism with a negative feedback mechanism. Acts as a regulator of intracellular Ca(2+) in synoviocytes. Plays an obligatory role as a molecular component in the nonselective cation channel activation induced by 4-alpha-phorbol 12,13-didecanoate and hypotonic stimulation in synoviocytes and also regulates production of IL-8. Together with PKD2, forms mechano- and thermosensitive channels in cilium. Promotes cell-cell junction formation in skin keratinocytes and plays an important role in the formation and/or maintenance of functional intercellular barriers. Negatively regulates expression of PPARGC1A, UCP1, oxidative metabolism and respiration in adipocytes. Regulates expression of chemokines and cytokines related to pro-inflammatory pathway in adipocytes. Together with AQP5, controls regulatory volume decrease in salivary epithelial cells. Required for normal development and maintenance of bone and cartilage. In its inactive state, may sequester DDX3X at the plasma membrane. When activated, the interaction between both proteins is affected and DDX3X relocalizes to the nucleus. In neurons of the central nervous system, could play a role in triggering voluntary water intake in response to increased sodium concentration in body fluid. In Mus musculus (Mouse), this protein is Transient receptor potential cation channel subfamily V member 4 (Trpv4).